Here is a 141-residue protein sequence, read N- to C-terminus: uncharacterized protein (141 aa).

It localises to the cytoplasm. This is an uncharacterized protein from Homo sapiens (Human).